We begin with the raw amino-acid sequence, 224 residues long: Ribonuclease T (224 aa).

In terms of domain architecture, Exonuclease spans 32–206; the sequence is VVVDVETGGF…YDTEKTAELF (175 aa). The Mg(2+) site is built by aspartate 35, glutamate 37, histidine 193, and aspartate 198. The active-site Proton donor/acceptor is histidine 193.

Belongs to the RNase T family. As to quaternary structure, homodimer. It depends on Mg(2+) as a cofactor.

Its function is as follows. Trims short 3' overhangs of a variety of RNA species, leaving a one or two nucleotide 3' overhang. Responsible for the end-turnover of tRNA: specifically removes the terminal AMP residue from uncharged tRNA (tRNA-C-C-A). Also appears to be involved in tRNA biosynthesis. The protein is Ribonuclease T of Pseudomonas fluorescens (strain Pf0-1).